Consider the following 243-residue polypeptide: DNA repair protein RecO (243 aa).

It belongs to the RecO family.

Involved in DNA repair and RecF pathway recombination. This Caulobacter vibrioides (strain NA1000 / CB15N) (Caulobacter crescentus) protein is DNA repair protein RecO.